The chain runs to 199 residues: Recombination protein RecR (199 aa).

A C4-type zinc finger spans residues 58–73 (CRTCFSLSDQPECRIC). The region spanning 81-176 (SIICVVEKPT…NVTRIASGVP (96 aa)) is the Toprim domain.

Belongs to the RecR family.

Functionally, may play a role in DNA repair. It seems to be involved in an RecBC-independent recombinational process of DNA repair. It may act with RecF and RecO. The protein is Recombination protein RecR of Desulforapulum autotrophicum (strain ATCC 43914 / DSM 3382 / VKM B-1955 / HRM2) (Desulfobacterium autotrophicum).